Here is a 41-residue protein sequence, read N- to C-terminus: Photosystem I reaction center subunit IX (41 aa).

Residues 7–27 (YLSTAPVLLTLWMTFTAGFII) form a helical membrane-spanning segment.

Belongs to the PsaJ family.

Its subcellular location is the plastid. The protein resides in the chloroplast thylakoid membrane. May help in the organization of the PsaE and PsaF subunits. This chain is Photosystem I reaction center subunit IX, found in Thalassiosira pseudonana (Marine diatom).